Consider the following 890-residue polypeptide: Alanine--tRNA ligase (890 aa).

Zn(2+)-binding residues include His572, His576, Cys674, and His678.

It belongs to the class-II aminoacyl-tRNA synthetase family. The cofactor is Zn(2+).

It localises to the cytoplasm. It catalyses the reaction tRNA(Ala) + L-alanine + ATP = L-alanyl-tRNA(Ala) + AMP + diphosphate. Functionally, catalyzes the attachment of alanine to tRNA(Ala) in a two-step reaction: alanine is first activated by ATP to form Ala-AMP and then transferred to the acceptor end of tRNA(Ala). Also edits incorrectly charged Ser-tRNA(Ala) and Gly-tRNA(Ala) via its editing domain. The chain is Alanine--tRNA ligase from Saccharopolyspora erythraea (strain ATCC 11635 / DSM 40517 / JCM 4748 / NBRC 13426 / NCIMB 8594 / NRRL 2338).